Here is a 399-residue protein sequence, read N- to C-terminus: Tryptophan synthase beta chain (399 aa).

Lysine 90 carries the post-translational modification N6-(pyridoxal phosphate)lysine.

This sequence belongs to the TrpB family. Tetramer of two alpha and two beta chains. Pyridoxal 5'-phosphate serves as cofactor.

It catalyses the reaction (1S,2R)-1-C-(indol-3-yl)glycerol 3-phosphate + L-serine = D-glyceraldehyde 3-phosphate + L-tryptophan + H2O. It participates in amino-acid biosynthesis; L-tryptophan biosynthesis; L-tryptophan from chorismate: step 5/5. The beta subunit is responsible for the synthesis of L-tryptophan from indole and L-serine. In Lactiplantibacillus plantarum (strain ATCC BAA-793 / NCIMB 8826 / WCFS1) (Lactobacillus plantarum), this protein is Tryptophan synthase beta chain.